Here is a 161-residue protein sequence, read N- to C-terminus: MSLIPSIFGGRRSNVFDPFSQDLWDPFEGFFTPSSALANASTARDVAAFTNARVDWKETPEAHVFKADLPGLKKEEVKVEVEDKNVLQISGERSKENEEKNDKWHRVERASGKFMRRFRLPENAKMEEVKATMENGVLTVVVPKAPEKKPQVKSIDISGAN.

The region spanning 45-160 is the sHSP domain; the sequence is DVAAFTNARV…QVKSIDISGA (116 aa).

This sequence belongs to the small heat shock protein (HSP20) family. May form oligomeric structures. Binds to AKR2A.

Its subcellular location is the cytoplasm. The protein is 18.1 kDa class I heat shock protein (HSP18.1) of Arabidopsis thaliana (Mouse-ear cress).